The chain runs to 23 residues: Aurein-4.4 (23 aa).

This sequence belongs to the frog skin active peptide (FSAP) family. Aurein subfamily. In terms of tissue distribution, expressed by the skin dorsal glands.

The protein localises to the secreted. In terms of biological role, has no antimicrobial or anticancer activity. The chain is Aurein-4.4 from Ranoidea aurea (Green and golden bell frog).